We begin with the raw amino-acid sequence, 481 residues long: Glutamine synthetase (481 aa).

Residues 22-106 (NEVEFVDFRF…VFCDVYDVYK (85 aa)) enclose the GS beta-grasp domain. The region spanning 114 to 481 (PRSIAKKALQ…PFEFITTYSC (368 aa)) is the GS catalytic domain. Mg(2+) is bound by residues Glu-139, Glu-141, Glu-223, and Glu-230. Residues 274–275 (NG) and Gly-275 each bind L-glutamate. Residue His-279 participates in Mg(2+) binding. ATP contacts are provided by residues 281–283 (HVS) and Ser-283. L-glutamate-binding residues include Arg-331, Glu-337, and Arg-349. ATP is bound by residues Arg-349 and Arg-354. Glu-367 is a Mg(2+) binding site. Arg-369 is a binding site for L-glutamate.

This sequence belongs to the glutamine synthetase family. In terms of assembly, oligomer of 12 subunits arranged in the form of two hexameric ring. Requires Mg(2+) as cofactor.

Its subcellular location is the cytoplasm. It carries out the reaction L-glutamate + NH4(+) + ATP = L-glutamine + ADP + phosphate + H(+). Its activity is regulated as follows. The activity of this enzyme could be controlled by adenylation under conditions of abundant glutamine. Catalyzes the ATP-dependent biosynthesis of glutamine from glutamate and ammonia. The chain is Glutamine synthetase from Helicobacter pylori (strain ATCC 700392 / 26695) (Campylobacter pylori).